Here is a 251-residue protein sequence, read N- to C-terminus: DNA repair protein RecO (251 aa).

Belongs to the RecO family.

Involved in DNA repair and RecF pathway recombination. The polypeptide is DNA repair protein RecO (Acidiphilium cryptum (strain JF-5)).